The sequence spans 108 residues: Thiosulfate sulfurtransferase GlpE (108 aa).

In terms of domain architecture, Rhodanese spans 17–105 (RQGAAVLVDI…WHRRFPANVA (89 aa)). Residue Cys65 is the Cysteine persulfide intermediate of the active site.

The protein belongs to the GlpE family.

It is found in the cytoplasm. It carries out the reaction thiosulfate + hydrogen cyanide = thiocyanate + sulfite + 2 H(+). The catalysed reaction is thiosulfate + [thioredoxin]-dithiol = [thioredoxin]-disulfide + hydrogen sulfide + sulfite + 2 H(+). Functionally, transferase that catalyzes the transfer of sulfur from thiosulfate to thiophilic acceptors such as cyanide or dithiols. May function in a CysM-independent thiosulfate assimilation pathway by catalyzing the conversion of thiosulfate to sulfite, which can then be used for L-cysteine biosynthesis. The chain is Thiosulfate sulfurtransferase GlpE from Salmonella agona (strain SL483).